A 564-amino-acid chain; its full sequence is Dihydroxy-acid dehydratase (564 aa).

Residue aspartate 80 participates in Mg(2+) binding. Position 121 (cysteine 121) interacts with [2Fe-2S] cluster. Mg(2+) is bound by residues aspartate 122 and lysine 123. Residue lysine 123 is modified to N6-carboxylysine. [2Fe-2S] cluster is bound at residue cysteine 194. A Mg(2+)-binding site is contributed by glutamate 447. Serine 473 serves as the catalytic Proton acceptor.

It belongs to the IlvD/Edd family. Homodimer. Requires [2Fe-2S] cluster as cofactor. Mg(2+) serves as cofactor.

It catalyses the reaction (2R)-2,3-dihydroxy-3-methylbutanoate = 3-methyl-2-oxobutanoate + H2O. It carries out the reaction (2R,3R)-2,3-dihydroxy-3-methylpentanoate = (S)-3-methyl-2-oxopentanoate + H2O. Its pathway is amino-acid biosynthesis; L-isoleucine biosynthesis; L-isoleucine from 2-oxobutanoate: step 3/4. It participates in amino-acid biosynthesis; L-valine biosynthesis; L-valine from pyruvate: step 3/4. Functions in the biosynthesis of branched-chain amino acids. Catalyzes the dehydration of (2R,3R)-2,3-dihydroxy-3-methylpentanoate (2,3-dihydroxy-3-methylvalerate) into 2-oxo-3-methylpentanoate (2-oxo-3-methylvalerate) and of (2R)-2,3-dihydroxy-3-methylbutanoate (2,3-dihydroxyisovalerate) into 2-oxo-3-methylbutanoate (2-oxoisovalerate), the penultimate precursor to L-isoleucine and L-valine, respectively. The chain is Dihydroxy-acid dehydratase from Listeria monocytogenes serotype 4b (strain CLIP80459).